The sequence spans 275 residues: NH(3)-dependent NAD(+) synthetase (275 aa).

46–53 contacts ATP; it reads GISGGQDS. Aspartate 52 is a Mg(2+) binding site. Residue arginine 140 coordinates deamido-NAD(+). Threonine 160 is an ATP binding site. A Mg(2+)-binding site is contributed by glutamate 165. Deamido-NAD(+) is bound by residues lysine 173 and aspartate 180. 2 residues coordinate ATP: lysine 189 and threonine 211. Deamido-NAD(+) is bound at residue 260–261; it reads HK.

This sequence belongs to the NAD synthetase family. As to quaternary structure, homodimer.

It carries out the reaction deamido-NAD(+) + NH4(+) + ATP = AMP + diphosphate + NAD(+) + H(+). It functions in the pathway cofactor biosynthesis; NAD(+) biosynthesis; NAD(+) from deamido-NAD(+) (ammonia route): step 1/1. Its function is as follows. Catalyzes the ATP-dependent amidation of deamido-NAD to form NAD. Uses ammonia as a nitrogen source. The polypeptide is NH(3)-dependent NAD(+) synthetase (Salmonella heidelberg (strain SL476)).